The sequence spans 213 residues: Uridine kinase (213 aa).

15 to 22 (GASASGKS) lines the ATP pocket.

Belongs to the uridine kinase family.

The protein localises to the cytoplasm. The enzyme catalyses uridine + ATP = UMP + ADP + H(+). It carries out the reaction cytidine + ATP = CMP + ADP + H(+). It functions in the pathway pyrimidine metabolism; CTP biosynthesis via salvage pathway; CTP from cytidine: step 1/3. It participates in pyrimidine metabolism; UMP biosynthesis via salvage pathway; UMP from uridine: step 1/1. This Erwinia tasmaniensis (strain DSM 17950 / CFBP 7177 / CIP 109463 / NCPPB 4357 / Et1/99) protein is Uridine kinase.